Reading from the N-terminus, the 535-residue chain is Isoleucine N-monooxygenase 1 (535 aa).

Residues 1 to 8 (MGLMPDFL) are Cytoplasmic-facing. Residues 9–29 (SLCHEFPWTFLLVVIFSFMIF) traverse the membrane as a helical; Signal-anchor for type II membrane protein segment. Residues 30-535 (KVTKTHLVNK…AAELYRTNEI (506 aa)) lie on the Lumenal side of the membrane. Residues asparagine 38, asparagine 232, and asparagine 404 are each glycosylated (N-linked (GlcNAc...) asparagine). Cysteine 470 lines the heme pocket.

This sequence belongs to the cytochrome P450 family. The cofactor is heme. In terms of tissue distribution, exclusively expressed in aerial parts. Highest expression in the apical leaves. Also detected in the second leaf from the top and in the stem. Not expressed in older leaves or roots.

The protein resides in the microsome membrane. The catalysed reaction is L-isoleucine + 2 reduced [NADPH--hemoprotein reductase] + 2 O2 = (1E,2S)-2-methylbutanal oxime + 2 oxidized [NADPH--hemoprotein reductase] + CO2 + 3 H2O + 2 H(+). The enzyme catalyses L-isoleucine + reduced [NADPH--hemoprotein reductase] + O2 = N-hydroxy-L-isoleucine + oxidized [NADPH--hemoprotein reductase] + H2O + 2 H(+). It catalyses the reaction N-hydroxy-L-isoleucine + reduced [NADPH--hemoprotein reductase] + O2 = N,N-dihydroxy-L-isoleucine + oxidized [NADPH--hemoprotein reductase] + H2O + H(+). It carries out the reaction L-valine + 2 reduced [NADPH--hemoprotein reductase] + 2 O2 = (E)-2-methylpropanal oxime + 2 oxidized [NADPH--hemoprotein reductase] + CO2 + 3 H2O + 2 H(+). The catalysed reaction is L-valine + reduced [NADPH--hemoprotein reductase] + O2 = N-hydroxy-L-valine + oxidized [NADPH--hemoprotein reductase] + H2O + 2 H(+). The enzyme catalyses N-hydroxy-L-valine + reduced [NADPH--hemoprotein reductase] + O2 = N,N-dihydroxy-L-valine + oxidized [NADPH--hemoprotein reductase] + H2O + H(+). The protein operates within secondary metabolite biosynthesis. In terms of biological role, involved in the biosynthesis of the cyanogenic glucosides linamarin and lotaustralin and of the nitirle glucosides rhodiocyanoside A and D. Can use L-isoleucine &gt; L-valine as substrate, but not L-leucine, L-phenylalanine or L-tyrosine. Catalyzes multi-step reactions starting with two successive N-hydroxylations using L-isoleucine and, to a lower extent, L-valine as substrates leading to the formation of N,N-dihydroxy-L-valine and N,N-dihydroxy-L-isoleucine, respectively; following spontaneous reactions lead to the production of (E)-2-methylpropanal oxime and (1E,2S)-2-methylbutanal oxime, respectively. The polypeptide is Isoleucine N-monooxygenase 1 (Lotus japonicus (Lotus corniculatus var. japonicus)).